The primary structure comprises 88 residues: MGFTDETVRFNLNDGDKNEISNTLTNVYRSLAEKGYNPINQIVGYVLSGDPAYVPRYNDARNQIRKYERDEIVEELVRYYLKGNGTDL.

Belongs to the UPF0297 family.

This is UPF0297 protein STER_1937 from Streptococcus thermophilus (strain ATCC BAA-491 / LMD-9).